A 474-amino-acid polypeptide reads, in one-letter code: ATP synthase subunit beta 2 (474 aa).

Residue 151–158 (GGAGVGKT) participates in ATP binding.

It belongs to the ATPase alpha/beta chains family. As to quaternary structure, F-type ATPases have 2 components, CF(1) - the catalytic core - and CF(0) - the membrane proton channel. CF(1) has five subunits: alpha(3), beta(3), gamma(1), delta(1), epsilon(1). CF(0) has four main subunits: a(1), b(1), b'(1) and c(9-12).

Its subcellular location is the cell inner membrane. The enzyme catalyses ATP + H2O + 4 H(+)(in) = ADP + phosphate + 5 H(+)(out). In terms of biological role, produces ATP from ADP in the presence of a proton gradient across the membrane. The catalytic sites are hosted primarily by the beta subunits. The sequence is that of ATP synthase subunit beta 2 from Dinoroseobacter shibae (strain DSM 16493 / NCIMB 14021 / DFL 12).